The sequence spans 541 residues: Light-independent protochlorophyllide reductase subunit B (541 aa).

Asp36 is a binding site for [4Fe-4S] cluster. Asp286 acts as the Proton donor in catalysis. 421 to 422 (GM) is a binding site for substrate.

It belongs to the ChlB/BchB/BchZ family. Protochlorophyllide reductase is composed of three subunits; BchL, BchN and BchB. Forms a heterotetramer of two BchB and two BchN subunits. It depends on [4Fe-4S] cluster as a cofactor.

It catalyses the reaction chlorophyllide a + oxidized 2[4Fe-4S]-[ferredoxin] + 2 ADP + 2 phosphate = protochlorophyllide a + reduced 2[4Fe-4S]-[ferredoxin] + 2 ATP + 2 H2O. It functions in the pathway porphyrin-containing compound metabolism; bacteriochlorophyll biosynthesis (light-independent). Component of the dark-operative protochlorophyllide reductase (DPOR) that uses Mg-ATP and reduced ferredoxin to reduce ring D of protochlorophyllide (Pchlide) to form chlorophyllide a (Chlide). This reaction is light-independent. The NB-protein (BchN-BchB) is the catalytic component of the complex. This is Light-independent protochlorophyllide reductase subunit B from Chloroflexus aurantiacus (strain ATCC 29364 / DSM 637 / Y-400-fl).